The sequence spans 404 residues: Nicotinate phosphoribosyltransferase (404 aa).

At His-224 the chain carries Phosphohistidine; by autocatalysis.

The protein belongs to the NAPRTase family. In terms of processing, transiently phosphorylated on a His residue during the reaction cycle. Phosphorylation strongly increases the affinity for substrates and increases the rate of nicotinate D-ribonucleotide production. Dephosphorylation regenerates the low-affinity form of the enzyme, leading to product release.

It carries out the reaction nicotinate + 5-phospho-alpha-D-ribose 1-diphosphate + ATP + H2O = nicotinate beta-D-ribonucleotide + ADP + phosphate + diphosphate. Its pathway is cofactor biosynthesis; NAD(+) biosynthesis; nicotinate D-ribonucleotide from nicotinate: step 1/1. Catalyzes the synthesis of beta-nicotinate D-ribonucleotide from nicotinate and 5-phospho-D-ribose 1-phosphate at the expense of ATP. This is Nicotinate phosphoribosyltransferase from Proteus mirabilis (strain HI4320).